The chain runs to 128 residues: uncharacterized protein (128 aa).

The next 4 helical transmembrane spans lie at 5 to 25 (ILALLIWSSSLIVGKLTYSMM), 27 to 47 (PVLVVQVRLIIAMIIVMPLFL), 60 to 80 (QLWWLAFFNYTAVFLLQFIGL), and 87 to 107 (SAVTMIGLEPLLVVFVGHFFF). The region spanning 9 to 110 (LIWSSSLIVG…FVGHFFFKTK (102 aa)) is the EamA domain.

Its subcellular location is the cell membrane. This is an uncharacterized protein from Haemophilus influenzae (strain ATCC 51907 / DSM 11121 / KW20 / Rd).